The following is a 205-amino-acid chain: Small ribosomal subunit protein uS4 (205 aa).

Residues 93-171 (SRVSSVLYRS…SPHYLEVDRE (79 aa)) form the S4 RNA-binding domain.

The protein belongs to the universal ribosomal protein uS4 family. In terms of assembly, part of the 30S ribosomal subunit. Contacts protein S5. The interaction surface between S4 and S5 is involved in control of translational fidelity.

One of the primary rRNA binding proteins, it binds directly to 16S rRNA where it nucleates assembly of the body of the 30S subunit. Its function is as follows. With S5 and S12 plays an important role in translational accuracy. In Neorickettsia sennetsu (strain ATCC VR-367 / Miyayama) (Ehrlichia sennetsu), this protein is Small ribosomal subunit protein uS4.